A 339-amino-acid chain; its full sequence is Nicotinate-nucleotide--dimethylbenzimidazole phosphoribosyltransferase (339 aa).

The active-site Proton acceptor is Glu-306.

It belongs to the CobT family.

The catalysed reaction is 5,6-dimethylbenzimidazole + nicotinate beta-D-ribonucleotide = alpha-ribazole 5'-phosphate + nicotinate + H(+). Its pathway is nucleoside biosynthesis; alpha-ribazole biosynthesis; alpha-ribazole from 5,6-dimethylbenzimidazole: step 1/2. Functionally, catalyzes the synthesis of alpha-ribazole-5'-phosphate from nicotinate mononucleotide (NAMN) and 5,6-dimethylbenzimidazole (DMB). In Brucella melitensis biotype 2 (strain ATCC 23457), this protein is Nicotinate-nucleotide--dimethylbenzimidazole phosphoribosyltransferase.